The primary structure comprises 367 residues: GMP synthase [glutamine-hydrolyzing] subunit B (367 aa).

A GMPS ATP-PPase domain is found at 2–190; that stretch reads FDPASFVKEI…LKLPKEISER (189 aa). Position 29-35 (29-35) interacts with ATP; sequence SGGVDST.

As to quaternary structure, heterodimer composed of a glutamine amidotransferase subunit (A) and a GMP-binding subunit (B).

The enzyme catalyses XMP + L-glutamine + ATP + H2O = GMP + L-glutamate + AMP + diphosphate + 2 H(+). Its pathway is purine metabolism; GMP biosynthesis; GMP from XMP (L-Gln route): step 1/1. In terms of biological role, catalyzes the synthesis of GMP from XMP. This Saccharolobus islandicus (strain M.16.27) (Sulfolobus islandicus) protein is GMP synthase [glutamine-hydrolyzing] subunit B.